The chain runs to 188 residues: Elongation factor P (188 aa).

Belongs to the elongation factor P family.

It is found in the cytoplasm. It functions in the pathway protein biosynthesis; polypeptide chain elongation. Functionally, involved in peptide bond synthesis. Stimulates efficient translation and peptide-bond synthesis on native or reconstituted 70S ribosomes in vitro. Probably functions indirectly by altering the affinity of the ribosome for aminoacyl-tRNA, thus increasing their reactivity as acceptors for peptidyl transferase. The polypeptide is Elongation factor P (Rickettsia typhi (strain ATCC VR-144 / Wilmington)).